A 346-amino-acid chain; its full sequence is Cell division protein FtsZ 2 (346 aa).

GTP contacts are provided by residues 23 to 27, 110 to 112, Glu141, Arg145, and Asp189; these read GGGGN and GTG. Residues 320–346 form a disordered region; the sequence is SNRSAQPTAPEAMNGQTAAAVPSRTLQ.

Belongs to the FtsZ family. As to quaternary structure, homodimer. Polymerizes to form a dynamic ring structure in a strictly GTP-dependent manner. Interacts directly with several other division proteins.

It is found in the cytoplasm. Essential cell division protein that forms a contractile ring structure (Z ring) at the future cell division site. The regulation of the ring assembly controls the timing and the location of cell division. One of the functions of the FtsZ ring is to recruit other cell division proteins to the septum to produce a new cell wall between the dividing cells. Binds GTP and shows GTPase activity. The protein is Cell division protein FtsZ 2 of Rhizobium meliloti (strain 1021) (Ensifer meliloti).